The primary structure comprises 360 residues: Methionine import ATP-binding protein MetN (360 aa).

Positions 1–22 are disordered; it reads MSHTASTPTPEEYSAQQPSTQG. The 241-residue stretch at 25 to 265 folds into the ABC transporter domain; the sequence is VEFRGITKVF…PQTQVAQKFV (241 aa). Residue 62–69 participates in ATP binding; that stretch reads GYSGAGKS.

The protein belongs to the ABC transporter superfamily. Methionine importer (TC 3.A.1.24) family. In terms of assembly, the complex is composed of two ATP-binding proteins (MetN), two transmembrane proteins (MetI) and a solute-binding protein (MetQ).

The protein resides in the cell membrane. The enzyme catalyses L-methionine(out) + ATP + H2O = L-methionine(in) + ADP + phosphate + H(+). It catalyses the reaction D-methionine(out) + ATP + H2O = D-methionine(in) + ADP + phosphate + H(+). Its function is as follows. Part of the ABC transporter complex MetNIQ involved in methionine import. Responsible for energy coupling to the transport system. This is Methionine import ATP-binding protein MetN from Corynebacterium glutamicum (strain ATCC 13032 / DSM 20300 / JCM 1318 / BCRC 11384 / CCUG 27702 / LMG 3730 / NBRC 12168 / NCIMB 10025 / NRRL B-2784 / 534).